Consider the following 475-residue polypeptide: Proton-coupled amino acid transporter 1 (475 aa).

A compositionally biased stretch (basic and acidic residues) spans 1-15 (MSTQRLRNEDYHDYS). The segment at 1-32 (MSTQRLRNEDYHDYSSTDVSPEESPSEGLGSF) is disordered. Residues 1–50 (MSTQRLRNEDYHDYSSTDVSPEESPSEGLGSFSPGSYQRLGENSSMTWFQ) lie on the Cytoplasmic side of the membrane. The chain crosses the membrane as a helical span at residues 51 to 71 (TLIHLLKGNIGTGLLGLPLAV). Residues 72–77 (KNAGLL) are Extracellular-facing. Residues 78 to 98 (LGPLSLLVIGIVAVHCMGILV) traverse the membrane as a helical segment. Over 99-140 (KCAHHLCRRLNKPFLDYGDTVMYGLECSPSTWIRNHSHWGRR) the chain is Cytoplasmic. Residues 141–161 (IVDFFLVVTQLGFCCVYFVFL) traverse the membrane as a helical segment. At 162–189 (ADNFKQVIEAANGTTTNCNNNETVILTP) the chain is on the extracellular side. Asn173 and Asn182 each carry an N-linked (GlcNAc...) asparagine glycan. Cys179 and Cys328 form a disulfide bridge. A helical membrane pass occupies residues 190-210 (TMDSRLYMLTFLPFLVLLSFI). Over 211–214 (RNLR) the chain is Cytoplasmic. Residues 215 to 235 (ILSIFSLLANISMFVSLIMIY) traverse the membrane as a helical segment. Topologically, residues 236–256 (QFIVQRIPDPSHLPLVAPWKT) are extracellular. Residues 257-277 (YPLFFGTAIFAFEGIGVVLPL) traverse the membrane as a helical segment. Residues 278-288 (ENKMKDSQKFP) lie on the Cytoplasmic side of the membrane. The chain crosses the membrane as a helical span at residues 289 to 309 (LILYLGMAIITVLYISLGSLG). The Extracellular segment spans residues 310–341 (YLQFGADIKGSITLNLPNCWLYQSVKLLYSIG). Residues 342 to 362 (IFFTYALQFYVAAEIIIPAIV) form a helical membrane-spanning segment. Residues 363-371 (SRVPERFEL) are Cytoplasmic-facing. The chain crosses the membrane as a helical span at residues 372–392 (VVDLSARTAMVCVTCVLAVLI). Residues 393–396 (PRLD) are Extracellular-facing. A helical transmembrane segment spans residues 397–417 (LVISLVGSVSSSALALIIPPL). The Cytoplasmic portion of the chain corresponds to 418-438 (LEVTTYYGEGISPLTITKDAL). The helical transmembrane segment at 439–459 (ISILGFVGFVVGTYESLWELI) threads the bilayer. The Extracellular portion of the chain corresponds to 460–475 (QPSHSDSSTNSTSAFI). Asn469 carries N-linked (GlcNAc...) asparagine glycosylation.

This sequence belongs to the amino acid/polyamine transporter 2 family. In terms of tissue distribution, widely expressed and predominantly expressed in brain. Within the brain, expression restricted to neurons and not detected in glial cells. Abundant in regions rich in neurons using glutamate and GABA such as Purkinje cells in the cerebellum and pyramidal cells in the hippocampus.

It localises to the cell membrane. The protein localises to the apical cell membrane. It is found in the lysosome membrane. It carries out the reaction glycine(in) + H(+)(in) = glycine(out) + H(+)(out). It catalyses the reaction L-proline(out) + H(+)(out) = L-proline(in) + H(+)(in). The enzyme catalyses D-proline(out) + H(+)(out) = D-proline(in) + H(+)(in). The catalysed reaction is L-alanine(in) + H(+)(in) = L-alanine(out) + H(+)(out). It carries out the reaction D-alanine(in) + H(+)(in) = D-alanine(out) + H(+)(out). It catalyses the reaction L-serine(in) + H(+)(in) = L-serine(out) + H(+)(out). The enzyme catalyses D-serine(out) + H(+)(out) = D-serine(in) + H(+)(in). The catalysed reaction is 4-aminobutanoate(in) + H(+)(in) = 4-aminobutanoate(out) + H(+)(out). It carries out the reaction beta-alanine(in) + H(+)(in) = beta-alanine(out) + H(+)(out). In terms of biological role, electrogenic proton/amino acid symporter with selectivity for small apolar L-amino acids, their D-enantiomers and selected amino acid derivatives such as 4-aminobutanoate/GABA. May be involved in the efflux from the lysosomal compartment of neutral amino acids resulting from proteolysis. May play a role in specifying sites for exocytosis in neurons. The chain is Proton-coupled amino acid transporter 1 from Rattus norvegicus (Rat).